A 183-amino-acid chain; its full sequence is ESX-1 secretion-associated protein EspH (183 aa).

Residues 1–16 show a composition bias toward acidic residues; it reads MVDPPGNDDDHGDLDA. The interval 1–32 is disordered; sequence MVDPPGNDDDHGDLDALDFSAAHTNEASPLDA.

This chain is ESX-1 secretion-associated protein EspH, found in Mycobacterium tuberculosis (strain ATCC 25618 / H37Rv).